Consider the following 1330-residue polypeptide: DNA-directed RNA polymerase subunit beta'' (1330 aa).

Zn(2+) contacts are provided by Cys214, Cys282, Cys289, and Cys292.

It belongs to the RNA polymerase beta' chain family. RpoC2 subfamily. As to quaternary structure, in plastids the minimal PEP RNA polymerase catalytic core is composed of four subunits: alpha, beta, beta', and beta''. When a (nuclear-encoded) sigma factor is associated with the core the holoenzyme is formed, which can initiate transcription. Zn(2+) is required as a cofactor.

Its subcellular location is the plastid. The protein resides in the chloroplast. The enzyme catalyses RNA(n) + a ribonucleoside 5'-triphosphate = RNA(n+1) + diphosphate. In terms of biological role, DNA-dependent RNA polymerase catalyzes the transcription of DNA into RNA using the four ribonucleoside triphosphates as substrates. The chain is DNA-directed RNA polymerase subunit beta'' from Physcomitrium patens (Spreading-leaved earth moss).